A 336-amino-acid chain; its full sequence is Anthranilate phosphoribosyltransferase (336 aa).

5-phospho-alpha-D-ribose 1-diphosphate-binding positions include Gly82, Gly85 to Asp86, Thr90, Asn92 to Thr95, Lys110 to Ser118, and Ser122. Residue Gly82 coordinates anthranilate. Ser94 serves as a coordination point for Mg(2+). Asn113 provides a ligand contact to anthranilate. Arg168 is an anthranilate binding site. Residues Asp227 and Glu228 each coordinate Mg(2+).

This sequence belongs to the anthranilate phosphoribosyltransferase family. As to quaternary structure, homodimer. The cofactor is Mg(2+).

The enzyme catalyses N-(5-phospho-beta-D-ribosyl)anthranilate + diphosphate = 5-phospho-alpha-D-ribose 1-diphosphate + anthranilate. The protein operates within amino-acid biosynthesis; L-tryptophan biosynthesis; L-tryptophan from chorismate: step 2/5. In terms of biological role, catalyzes the transfer of the phosphoribosyl group of 5-phosphorylribose-1-pyrophosphate (PRPP) to anthranilate to yield N-(5'-phosphoribosyl)-anthranilate (PRA). In Leptospira interrogans serogroup Icterohaemorrhagiae serovar Lai (strain 56601), this protein is Anthranilate phosphoribosyltransferase.